Consider the following 135-residue polypeptide: UPF0102 protein Aave_0630 (135 aa).

Residues 1 to 21 (MGILEKKTAGPGGAARKTTTR) are disordered.

It belongs to the UPF0102 family.

The protein is UPF0102 protein Aave_0630 of Paracidovorax citrulli (strain AAC00-1) (Acidovorax citrulli).